We begin with the raw amino-acid sequence, 231 residues long: Ribose-5-phosphate isomerase A (231 aa).

Residues 32–35 (TGST), 85–88 (DGAD), and 98–101 (KGGG) each bind substrate. Residue glutamate 107 is the Proton acceptor of the active site. Position 125 (lysine 125) interacts with substrate.

This sequence belongs to the ribose 5-phosphate isomerase family. As to quaternary structure, homodimer.

The enzyme catalyses aldehydo-D-ribose 5-phosphate = D-ribulose 5-phosphate. It functions in the pathway carbohydrate degradation; pentose phosphate pathway; D-ribose 5-phosphate from D-ribulose 5-phosphate (non-oxidative stage): step 1/1. Its function is as follows. Catalyzes the reversible conversion of ribose-5-phosphate to ribulose 5-phosphate. This Paraburkholderia xenovorans (strain LB400) protein is Ribose-5-phosphate isomerase A.